Here is a 256-residue protein sequence, read N- to C-terminus: MLLAIDCGNTNTVFAIHDGTDFVAVWRTATEHQRTADQYYVWLQSLMQMQKIEVEITEVIISSTVPRVVFNLRVLCDRYFNCRPLVVGKPGCALPVDVRVDAGTQVGPDRLVNTVAGFTQFGGDLIVVDFGTATTFDVVDVDGAYVGGVIAPGVNLSLEALHNAAAALPHVDISMPDTVVGTNTVACMQSGVFWGYVGLVREICAQIKAERARPMRVIATGGLAPLFSQGAELFDAWVDDLTMQGLVTINSYNREA.

6 to 13 is a binding site for ATP; that stretch reads DCGNTNTV. Substrate is bound at residue 107–110; sequence GPDR. Asp109 functions as the Proton acceptor in the catalytic mechanism. Position 129 (Asp129) interacts with K(+). Thr132 is an ATP binding site. Residue Thr184 participates in substrate binding.

This sequence belongs to the type III pantothenate kinase family. Homodimer. NH4(+) is required as a cofactor. Requires K(+) as cofactor.

It is found in the cytoplasm. It carries out the reaction (R)-pantothenate + ATP = (R)-4'-phosphopantothenate + ADP + H(+). It functions in the pathway cofactor biosynthesis; coenzyme A biosynthesis; CoA from (R)-pantothenate: step 1/5. Its function is as follows. Catalyzes the phosphorylation of pantothenate (Pan), the first step in CoA biosynthesis. This chain is Type III pantothenate kinase, found in Dinoroseobacter shibae (strain DSM 16493 / NCIMB 14021 / DFL 12).